A 687-amino-acid polypeptide reads, in one-letter code: MIDRYKHQQLRIGSVSPQQISAWATKILPNGEIVGEVTKPYTFHYKTNKPEKDGLFCERIFGPIKSGICACGNYRVIGDEKEDPKFCEQCGVEFVDSRIRRYQMGYIKLACPVTHVWYLKRLPSYIANLLDKPLKELEGLVYCDIESYPNFSFARPITKKPTFLRLRGLFEYEIQSWKYSIPLFFTTKGFDTFRNREIYTGAGAIREQLADLDLRIIIENSLVEWEELGEEGHTGNEWEDRKVGRRKDFLVRRVELAKHFIQSNIDPQWMVWCLLPVLPPELRPIIRIDGGKLMSSDISELYRKVIYRNNTLTDLLRTSKSTPGELVMCQEKLVQEAVDTLLDNGIRGQPMRDGHNKVYKSFSDVIEGKEGRFRETLLGKRVDYSGRSVIVVGPSLSLHRCGLPREIAIELFQTFVIRGLIRQHLASNIGVAKSKIREKEPIVWEILQEVMQGHPVLLNRAPTLHRLGIQAFQPVLVEGRAICLHPLVCKGFHADFDGDQMDFKVPLSLEAQVEARLLMFSHMNLLSPAIGDPISVPTQDMLIGLYVLTSGNHRGICVNRYNPCNRRNYQNQKRSDNSYYKYTKEPFFSNSYDAIGAYRQKRINLDSPLWLRWRLDQRVIASRETPIEVHYESLGTFYEIYGHYLIVRSLKKKILFIYIRTTVGHIALYREIEEAIQGFSRAYSYAT.

C69, C71, C87, and C90 together coordinate Zn(2+). Residues D495, D497, and D499 each coordinate Mg(2+).

It belongs to the RNA polymerase beta' chain family. RpoC1 subfamily. In terms of assembly, in plastids the minimal PEP RNA polymerase catalytic core is composed of four subunits: alpha, beta, beta', and beta''. When a (nuclear-encoded) sigma factor is associated with the core the holoenzyme is formed, which can initiate transcription. Mg(2+) serves as cofactor. Requires Zn(2+) as cofactor.

It is found in the plastid. The protein localises to the chloroplast. It catalyses the reaction RNA(n) + a ribonucleoside 5'-triphosphate = RNA(n+1) + diphosphate. Functionally, DNA-dependent RNA polymerase catalyzes the transcription of DNA into RNA using the four ribonucleoside triphosphates as substrates. In Solanum tuberosum (Potato), this protein is DNA-directed RNA polymerase subunit beta'.